Here is a 421-residue protein sequence, read N- to C-terminus: GTPase Obg (421 aa).

The Obg domain occupies 1–158 (MYFIDEAINE…FKIKTELKIL (158 aa)). The OBG-type G domain maps to 159 to 324 (ADVGLIGYPS…LKYKMLEMIK (166 aa)). GTP is bound by residues 165 to 172 (GYPSVGKS), 190 to 194 (FTTLK), 211 to 214 (DLPG), 278 to 281 (NKMD), and 305 to 307 (SLL). The Mg(2+) site is built by S172 and T192. The 80-residue stretch at 342–421 (TLEEEKPDFV…ICDRVFEFIT (80 aa)) folds into the OCT domain.

The protein belongs to the TRAFAC class OBG-HflX-like GTPase superfamily. OBG GTPase family. As to quaternary structure, monomer. It depends on Mg(2+) as a cofactor.

It is found in the cytoplasm. Its function is as follows. An essential GTPase which binds GTP, GDP and possibly (p)ppGpp with moderate affinity, with high nucleotide exchange rates and a fairly low GTP hydrolysis rate. Plays a role in control of the cell cycle, stress response, ribosome biogenesis and in those bacteria that undergo differentiation, in morphogenesis control. The polypeptide is GTPase Obg (Phytoplasma mali (strain AT)).